The following is a 456-amino-acid chain: RuvB-like helicase 1 (456 aa).

70-77 (GPPGTGKT) provides a ligand contact to ATP.

It belongs to the RuvB family. Forms homohexameric rings. May form a dodecamer with rept made of two stacked hexameric rings. Component of the chromatin remodeling Ino80 complex.

Its subcellular location is the nucleus. It carries out the reaction ATP + H2O = ADP + phosphate + H(+). Functionally, acts as a transcriptional coactivator in Wg signaling. Its function is as follows. Proposed core component of the chromatin remodeling Ino80 complex which is involved in transcriptional regulation, DNA replication and probably DNA repair. The polypeptide is RuvB-like helicase 1 (Aedes aegypti (Yellowfever mosquito)).